Reading from the N-terminus, the 220-residue chain is Deoxyribose-phosphate aldolase (220 aa).

Aspartate 89 (proton donor/acceptor) is an active-site residue. The Schiff-base intermediate with acetaldehyde role is filled by lysine 151. Lysine 180 (proton donor/acceptor) is an active-site residue.

Belongs to the DeoC/FbaB aldolase family. DeoC type 1 subfamily.

The protein resides in the cytoplasm. It carries out the reaction 2-deoxy-D-ribose 5-phosphate = D-glyceraldehyde 3-phosphate + acetaldehyde. Its pathway is carbohydrate degradation; 2-deoxy-D-ribose 1-phosphate degradation; D-glyceraldehyde 3-phosphate and acetaldehyde from 2-deoxy-alpha-D-ribose 1-phosphate: step 2/2. Catalyzes a reversible aldol reaction between acetaldehyde and D-glyceraldehyde 3-phosphate to generate 2-deoxy-D-ribose 5-phosphate. The sequence is that of Deoxyribose-phosphate aldolase from Streptococcus suis (strain 05ZYH33).